An 873-amino-acid polypeptide reads, in one-letter code: DNA mismatch repair protein MutS (873 aa).

620-627 contacts ATP; it reads GPNMAGKS.

This sequence belongs to the DNA mismatch repair MutS family.

Its function is as follows. This protein is involved in the repair of mismatches in DNA. It is possible that it carries out the mismatch recognition step. This protein has a weak ATPase activity. The polypeptide is DNA mismatch repair protein MutS (Ruminiclostridium cellulolyticum (strain ATCC 35319 / DSM 5812 / JCM 6584 / H10) (Clostridium cellulolyticum)).